The primary structure comprises 298 residues: MTDATTISPLDQARILSEALPHMQEYDDETIVIKYGGHAMGDEDTAKAFARDIVLLEQTAINPVVVHGGGPQIATMLKRLGIVSEFAAGLRITDAATIEIVEMVLAGSINKQLVGYINEAGGKAVGLCGKDGNMVRAVKATRTMVDPDSHIEKVVDLGFVGEPDKVDLTLLNQLIGYELIPILAPLATSKEGQTFNVNADTFAGAVAGALKAKRLLLLTDVPGVLDKSKKLIPELSVKDARKLIADGTISGGMIPKVETCIYALEQGVQGVVILDGKVQHAVLLELFTNQGTGTLIHK.

Residues 69-70, R91, and N196 each bind substrate; that span reads GG.

Belongs to the acetylglutamate kinase family. ArgB subfamily.

The protein localises to the cytoplasm. It carries out the reaction N-acetyl-L-glutamate + ATP = N-acetyl-L-glutamyl 5-phosphate + ADP. It participates in amino-acid biosynthesis; L-arginine biosynthesis; N(2)-acetyl-L-ornithine from L-glutamate: step 2/4. Functionally, catalyzes the ATP-dependent phosphorylation of N-acetyl-L-glutamate. In Bradyrhizobium sp. (strain BTAi1 / ATCC BAA-1182), this protein is Acetylglutamate kinase.